The primary structure comprises 218 residues: Ribonuclease T (218 aa).

Positions 22 to 196 (VVVDVETAGF…YDAMKTAELF (175 aa)) constitute an Exonuclease domain. Residues aspartate 25, glutamate 27, histidine 183, and aspartate 188 each contribute to the Mg(2+) site. Residue histidine 183 is the Proton donor/acceptor of the active site.

Belongs to the RNase T family. Homodimer. Mg(2+) is required as a cofactor.

Its function is as follows. Trims short 3' overhangs of a variety of RNA species, leaving a one or two nucleotide 3' overhang. Responsible for the end-turnover of tRNA: specifically removes the terminal AMP residue from uncharged tRNA (tRNA-C-C-A). Also appears to be involved in tRNA biosynthesis. This Hahella chejuensis (strain KCTC 2396) protein is Ribonuclease T.